Consider the following 127-residue polypeptide: MPTINQLVRKERKKVLEKSKSPALKNCPQRRGVCTRVYTTTPKKPNSALRKVAKVRLTSGFEVISYIGGEGHNLQEHSIVLVRGGRVKDLPGVKYHIVRGALDTAGVAKRTVSRSKYGAKRPKAAAK.

Asp-89 carries the 3-methylthioaspartic acid modification.

The protein belongs to the universal ribosomal protein uS12 family. In terms of assembly, part of the 30S ribosomal subunit. Contacts proteins S8 and S17. May interact with IF1 in the 30S initiation complex.

With S4 and S5 plays an important role in translational accuracy. Functionally, interacts with and stabilizes bases of the 16S rRNA that are involved in tRNA selection in the A site and with the mRNA backbone. Located at the interface of the 30S and 50S subunits, it traverses the body of the 30S subunit contacting proteins on the other side and probably holding the rRNA structure together. The combined cluster of proteins S8, S12 and S17 appears to hold together the shoulder and platform of the 30S subunit. The sequence is that of Small ribosomal subunit protein uS12 from Campylobacter lari (strain RM2100 / D67 / ATCC BAA-1060).